We begin with the raw amino-acid sequence, 343 residues long: Vancomycin C-type resistance protein VanC1 (343 aa).

Residues 134–336 (HQLADTMGIA…YEILVEQLIA (203 aa)) form the ATP-grasp domain. 164-219 (IQDHGFPIFIKPNEAGSSKGITKVTDKTALQSALTTAFAYGSTVLIQKAIAGIEIG) is a binding site for ATP. 3 residues coordinate Mg(2+): Asp-290, Glu-303, and Asn-305. Asp-290, Glu-303, and Asn-305 together coordinate Mn(2+).

This sequence belongs to the D-alanine--D-alanine ligase family. Mg(2+) serves as cofactor. The cofactor is Mn(2+).

It localises to the cell membrane. It carries out the reaction D-serine + D-alanine + ATP = D-alanyl-D-serine + ADP + phosphate + H(+). In terms of biological role, D-alanine--D-alanine ligase of altered specificity, which catalyzes synthesis of D-Ala-D-Ser; produces a peptidoglycan which does not terminate in D-alanine but in D-serine, thus probably reducing affinity for vancomycin. Together with VanT and VanXYC, required for vancomycin resistance in E.gallinarum strain BM4174. The protein is Vancomycin C-type resistance protein VanC1 of Enterococcus gallinarum.